The primary structure comprises 325 residues: Sulfite dehydrogenase subunit C (325 aa).

Transmembrane regions (helical) follow at residues 5–25, 43–63, 87–107, 126–146, 165–185, 186–206, 266–286, and 290–310; these read FSVIFLTTLLGAGQGLYLAMV, FYAVGSLVALLLLIAGLGASF, EVIVLPIVMALVFAYGVAHWF, LLLGVLGTIASLALFVCTAMI, FLFLGAASGFMLAAAYSAYIG, NPLVTFYGTWAVILTLVGLAS, VYLVLVFPIPVLLIGLSYLIG, and LPIIAFFVQFAGLLIERWSFF.

Belongs to the DmsC family. As to quaternary structure, forms a heterotrimeric membrane-bound complex composed of a catalytic heterodimer (SoeAB) and a membrane anchor protein (SoeC).

The protein resides in the cell inner membrane. Part of the SoeABC complex that catalyzes the oxidation of sulfite to sulfate. SoeC probably anchors and stabilizes the catalytic subunits. This chain is Sulfite dehydrogenase subunit C, found in Allochromatium vinosum (strain ATCC 17899 / DSM 180 / NBRC 103801 / NCIMB 10441 / D) (Chromatium vinosum).